A 117-amino-acid chain; its full sequence is Ribosome-binding factor A (117 aa).

Belongs to the RbfA family. Monomer. Binds 30S ribosomal subunits, but not 50S ribosomal subunits or 70S ribosomes.

Its subcellular location is the cytoplasm. Its function is as follows. One of several proteins that assist in the late maturation steps of the functional core of the 30S ribosomal subunit. Associates with free 30S ribosomal subunits (but not with 30S subunits that are part of 70S ribosomes or polysomes). Required for efficient processing of 16S rRNA. May interact with the 5'-terminal helix region of 16S rRNA. The protein is Ribosome-binding factor A of Syntrophobacter fumaroxidans (strain DSM 10017 / MPOB).